We begin with the raw amino-acid sequence, 505 residues long: Flagellin (505 aa).

The protein belongs to the bacterial flagellin family.

The protein localises to the secreted. The protein resides in the bacterial flagellum. Functionally, flagellin is the subunit protein which polymerizes to form the filaments of bacterial flagella. This chain is Flagellin (fliC), found in Salmonella montevideo.